We begin with the raw amino-acid sequence, 558 residues long: 2-isopropylmalate synthase (558 aa).

The Pyruvate carboxyltransferase domain occupies 30-303 (PIWCSVDLRD…DPELDCRDIE (274 aa)). Positions 39, 242, 244, and 278 each coordinate Mg(2+). The segment at 437 to 558 (QPNARIKFVD…ANRVLEERAK (122 aa)) is regulatory domain.

The protein belongs to the alpha-IPM synthase/homocitrate synthase family. LeuA type 2 subfamily. In terms of assembly, homodimer. It depends on Mg(2+) as a cofactor.

It is found in the cytoplasm. It catalyses the reaction 3-methyl-2-oxobutanoate + acetyl-CoA + H2O = (2S)-2-isopropylmalate + CoA + H(+). Its pathway is amino-acid biosynthesis; L-leucine biosynthesis; L-leucine from 3-methyl-2-oxobutanoate: step 1/4. In terms of biological role, catalyzes the condensation of the acetyl group of acetyl-CoA with 3-methyl-2-oxobutanoate (2-ketoisovalerate) to form 3-carboxy-3-hydroxy-4-methylpentanoate (2-isopropylmalate). In Agrobacterium fabrum (strain C58 / ATCC 33970) (Agrobacterium tumefaciens (strain C58)), this protein is 2-isopropylmalate synthase.